The sequence spans 236 residues: Probable transcriptional regulatory protein FP0835 (236 aa).

This sequence belongs to the TACO1 family.

Its subcellular location is the cytoplasm. In Flavobacterium psychrophilum (strain ATCC 49511 / DSM 21280 / CIP 103535 / JIP02/86), this protein is Probable transcriptional regulatory protein FP0835.